Here is a 136-residue protein sequence, read N- to C-terminus: Cytochrome c-550 (136 aa).

An N-terminal signal peptide occupies residues 1–28 (MTKLTFGALVALAMTAAASTAMSSKAMA). The heme c site is built by Cys-41, Cys-44, His-45, and Met-107.

Post-translationally, binds 1 heme c group covalently per subunit. In terms of processing, the N-terminus is blocked.

The protein localises to the periplasm. Its function is as follows. Plays a role in bacteroid respiration under conditions of oxygen limitation. Required for electron-transfer during denitrification. The sequence is that of Cytochrome c-550 (cycA) from Bradyrhizobium diazoefficiens (strain JCM 10833 / BCRC 13528 / IAM 13628 / NBRC 14792 / USDA 110).